An 84-amino-acid polypeptide reads, in one-letter code: Small ribosomal subunit protein uS17 (84 aa).

It belongs to the universal ribosomal protein uS17 family. As to quaternary structure, part of the 30S ribosomal subunit.

One of the primary rRNA binding proteins, it binds specifically to the 5'-end of 16S ribosomal RNA. The chain is Small ribosomal subunit protein uS17 from Karelsulcia muelleri (strain GWSS) (Sulcia muelleri).